The primary structure comprises 37 residues: Large ribosomal subunit protein bL36 (37 aa).

The protein belongs to the bacterial ribosomal protein bL36 family.

The protein is Large ribosomal subunit protein bL36 of Treponema denticola (strain ATCC 35405 / DSM 14222 / CIP 103919 / JCM 8153 / KCTC 15104).